The chain runs to 514 residues: 2,3-bisphosphoglycerate-independent phosphoglycerate mutase (514 aa).

Mn(2+)-binding residues include D14 and S64. Residue S64 is the Phosphoserine intermediate of the active site. Residues H125, 155 to 156 (RD), R187, R193, 263 to 266 (RADR), and K336 each bind substrate. Residues D403, H407, D444, H445, and H463 each coordinate Mn(2+).

It belongs to the BPG-independent phosphoglycerate mutase family. As to quaternary structure, monomer. Mn(2+) is required as a cofactor.

It carries out the reaction (2R)-2-phosphoglycerate = (2R)-3-phosphoglycerate. It functions in the pathway carbohydrate degradation; glycolysis; pyruvate from D-glyceraldehyde 3-phosphate: step 3/5. In terms of biological role, catalyzes the interconversion of 2-phosphoglycerate and 3-phosphoglycerate. The protein is 2,3-bisphosphoglycerate-independent phosphoglycerate mutase of Shewanella halifaxensis (strain HAW-EB4).